Consider the following 352-residue polypeptide: Fatty acid synthase (352 aa).

The Ketosynthase family 3 (KS3) domain occupies 1–352 (MEDVVIAGIA…KVVLSLEHGL (352 aa)). Catalysis depends on for beta-ketoacyl synthase activity residues C161, H293, and H331.

Homodimer which monomers are arranged in a head to tail fashion.

The catalysed reaction is acetyl-CoA + n malonyl-CoA + 2n NADPH + 2n H(+) = a long-chain fatty acid + (n+1) CoA + n CO2 + 2n NADP(+).. Its function is as follows. Fatty acid synthetase catalyzes the formation of long-chain fatty acids from acetyl-CoA, malonyl-CoA and NADPH. This multifunctional protein has 7 catalytic activities as an acyl carrier protein. This is Fatty acid synthase (FASN) from Anser anser anser (Western greylag goose).